Reading from the N-terminus, the 340-residue chain is Delta-aminolevulinic acid dehydratase (340 aa).

Zn(2+) is bound by residues C133, C135, and C143. K210 functions as the Schiff-base intermediate with substrate in the catalytic mechanism. Residues R220 and R232 each contribute to the 5-aminolevulinate site. The active-site Schiff-base intermediate with substrate is the K263. 5-aminolevulinate-binding residues include S290 and Y329.

This sequence belongs to the ALAD family. In terms of assembly, homooctamer. Zn(2+) is required as a cofactor.

It carries out the reaction 2 5-aminolevulinate = porphobilinogen + 2 H2O + H(+). It functions in the pathway porphyrin-containing compound metabolism; protoporphyrin-IX biosynthesis; coproporphyrinogen-III from 5-aminolevulinate: step 1/4. Catalyzes an early step in the biosynthesis of tetrapyrroles. Binds two molecules of 5-aminolevulinate per subunit, each at a distinct site, and catalyzes their condensation to form porphobilinogen. The sequence is that of Delta-aminolevulinic acid dehydratase (HEM2) from Candida glabrata (strain ATCC 2001 / BCRC 20586 / JCM 3761 / NBRC 0622 / NRRL Y-65 / CBS 138) (Yeast).